The following is a 218-amino-acid chain: Ribose-5-phosphate isomerase A (218 aa).

Substrate contacts are provided by residues 28-31, 81-84, and 94-97; these read TGST, DGAD, and KGGG. Glu103 (proton acceptor) is an active-site residue. Lys121 provides a ligand contact to substrate.

It belongs to the ribose 5-phosphate isomerase family. As to quaternary structure, homodimer.

The enzyme catalyses aldehydo-D-ribose 5-phosphate = D-ribulose 5-phosphate. Its pathway is carbohydrate degradation; pentose phosphate pathway; D-ribose 5-phosphate from D-ribulose 5-phosphate (non-oxidative stage): step 1/1. Its function is as follows. Catalyzes the reversible conversion of ribose-5-phosphate to ribulose 5-phosphate. The protein is Ribose-5-phosphate isomerase A of Sodalis glossinidius (strain morsitans).